The primary structure comprises 271 residues: Phosphate import ATP-binding protein PstB 2 (271 aa).

Residues 1 to 20 form a disordered region; that stretch reads MLTKKPEINTILQTTPDPHS. Residues 25–266 enclose the ABC transporter domain; that stretch reads MATEDLHVYY…PQEKQTEDYI (242 aa). 57–64 is a binding site for ATP; that stretch reads GPSGCGKS.

It belongs to the ABC transporter superfamily. Phosphate importer (TC 3.A.1.7) family. The complex is composed of two ATP-binding proteins (PstB), two transmembrane proteins (PstC and PstA) and a solute-binding protein (PstS).

The protein localises to the cell membrane. It carries out the reaction phosphate(out) + ATP + H2O = ADP + 2 phosphate(in) + H(+). Functionally, part of the ABC transporter complex PstSACB involved in phosphate import. Responsible for energy coupling to the transport system. This Listeria innocua serovar 6a (strain ATCC BAA-680 / CLIP 11262) protein is Phosphate import ATP-binding protein PstB 2.